Here is a 485-residue protein sequence, read N- to C-terminus: Protein disulfide-isomerase 1 (485 aa).

A signal peptide spans 1 to 20 (MSLSVSFIFLLVASIGAVVA). Thioredoxin domains lie at 21 to 130 (DSEN…KKSG) and 342 to 470 (YLEG…KYAG). Intrachain disulfides connect cysteine 52-cysteine 55 and cysteine 393-cysteine 396. Active-site nucleophile residues include cysteine 393 and cysteine 396. A Prevents secretion from ER motif is present at residues 482–485 (HEEL).

This sequence belongs to the protein disulfide isomerase family.

It localises to the endoplasmic reticulum lumen. The catalysed reaction is Catalyzes the rearrangement of -S-S- bonds in proteins.. This Caenorhabditis elegans protein is Protein disulfide-isomerase 1 (pdi-1).